Here is a 134-residue protein sequence, read N- to C-terminus: uncharacterized protein (134 aa).

3 consecutive transmembrane segments (helical) span residues 26–46 (VAVF…GNIG), 55–75 (LLKF…QIIV), and 101–121 (YAPM…GLIL).

Its subcellular location is the membrane. This is an uncharacterized protein from Dictyostelium discoideum (Social amoeba).